Consider the following 197-residue polypeptide: Nucleoid occlusion factor SlmA (197 aa).

An HTH tetR-type domain is found at Ile7–Leu67. The H-T-H motif DNA-binding region spans Thr30–Phe49. A coiled-coil region spans residues Asp109 to Ile136.

This sequence belongs to the nucleoid occlusion factor SlmA family. As to quaternary structure, homodimer. Interacts with FtsZ.

The protein resides in the cytoplasm. It is found in the nucleoid. Required for nucleoid occlusion (NO) phenomenon, which prevents Z-ring formation and cell division over the nucleoid. Acts as a DNA-associated cell division inhibitor that binds simultaneously chromosomal DNA and FtsZ, and disrupts the assembly of FtsZ polymers. SlmA-DNA-binding sequences (SBS) are dispersed on non-Ter regions of the chromosome, preventing FtsZ polymerization at these regions. In Shewanella halifaxensis (strain HAW-EB4), this protein is Nucleoid occlusion factor SlmA.